The primary structure comprises 336 residues: Glycerol-3-phosphate dehydrogenase [NAD(P)+] (336 aa).

The NADPH site is built by S16, Y17, H37, and K111. 3 residues coordinate sn-glycerol 3-phosphate: K111, G140, and T142. Residue A144 coordinates NADPH. Sn-glycerol 3-phosphate is bound by residues K196, D249, S259, R260, and N261. K196 (proton acceptor) is an active-site residue. R260 contributes to the NADPH binding site. Residues V284 and E286 each coordinate NADPH.

Belongs to the NAD-dependent glycerol-3-phosphate dehydrogenase family.

The protein resides in the cytoplasm. The catalysed reaction is sn-glycerol 3-phosphate + NAD(+) = dihydroxyacetone phosphate + NADH + H(+). It catalyses the reaction sn-glycerol 3-phosphate + NADP(+) = dihydroxyacetone phosphate + NADPH + H(+). It functions in the pathway membrane lipid metabolism; glycerophospholipid metabolism. Functionally, catalyzes the reduction of the glycolytic intermediate dihydroxyacetone phosphate (DHAP) to sn-glycerol 3-phosphate (G3P), the key precursor for phospholipid synthesis. This chain is Glycerol-3-phosphate dehydrogenase [NAD(P)+], found in Actinobacillus pleuropneumoniae serotype 3 (strain JL03).